Here is a 148-residue protein sequence, read N- to C-terminus: Flagellar assembly factor FliW (148 aa).

Belongs to the FliW family. In terms of assembly, interacts with translational regulator CsrA and flagellin(s).

It is found in the cytoplasm. Acts as an anti-CsrA protein, binds CsrA and prevents it from repressing translation of its target genes, one of which is flagellin. Binds to flagellin and participates in the assembly of the flagellum. This chain is Flagellar assembly factor FliW, found in Ruminiclostridium cellulolyticum (strain ATCC 35319 / DSM 5812 / JCM 6584 / H10) (Clostridium cellulolyticum).